We begin with the raw amino-acid sequence, 415 residues long: Squalene synthase 2 (415 aa).

A run of 2 helical transmembrane segments spans residues 281–301 and 392–412; these read AIFRFCAIPQIMSIGTLALCY and LIVILFIILAILYAYLSSNLP.

This sequence belongs to the phytoene/squalene synthase family. The cofactor is Mg(2+). Requires Mn(2+) as cofactor.

It localises to the endoplasmic reticulum membrane. It carries out the reaction 2 (2E,6E)-farnesyl diphosphate + NADH + H(+) = squalene + 2 diphosphate + NAD(+). The catalysed reaction is 2 (2E,6E)-farnesyl diphosphate + NADPH + H(+) = squalene + 2 diphosphate + NADP(+). Its pathway is terpene metabolism; lanosterol biosynthesis; lanosterol from farnesyl diphosphate: step 1/3. In terms of biological role, component of the triterpene saponins (e.g. ginsenosides or panaxosides) and phytosterols biosynthetic pathways. Catalyzes the biosynthesis of squalene. The sequence is that of Squalene synthase 2 from Panax ginseng (Korean ginseng).